The primary structure comprises 235 residues: Probable 2-phosphosulfolactate phosphatase (235 aa).

The protein belongs to the ComB family. It depends on Mg(2+) as a cofactor.

It catalyses the reaction (2R)-O-phospho-3-sulfolactate + H2O = (2R)-3-sulfolactate + phosphate. The chain is Probable 2-phosphosulfolactate phosphatase from Clostridium novyi (strain NT).